We begin with the raw amino-acid sequence, 187 residues long: Peptide deformylase (187 aa).

Residues C96 and H138 each contribute to the Fe cation site. Residue E139 is part of the active site. H142 provides a ligand contact to Fe cation.

Belongs to the polypeptide deformylase family. Requires Fe(2+) as cofactor.

It catalyses the reaction N-terminal N-formyl-L-methionyl-[peptide] + H2O = N-terminal L-methionyl-[peptide] + formate. Removes the formyl group from the N-terminal Met of newly synthesized proteins. Requires at least a dipeptide for an efficient rate of reaction. N-terminal L-methionine is a prerequisite for activity but the enzyme has broad specificity at other positions. This chain is Peptide deformylase, found in Brachyspira hyodysenteriae (strain ATCC 49526 / WA1).